Consider the following 521-residue polypeptide: Protein YjiT (521 aa).

This is Protein YjiT (yjiT) from Escherichia coli (strain K12).